An 83-amino-acid polypeptide reads, in one-letter code: Putative membrane protein insertion efficiency factor (83 aa).

Residues 63 to 83 form a disordered region; the sequence is GGNDPVPDHFSLRRNKTDISD. Over residues 68–83 the composition is skewed to basic and acidic residues; it reads VPDHFSLRRNKTDISD.

This sequence belongs to the UPF0161 family.

The protein localises to the cell membrane. Its function is as follows. Could be involved in insertion of integral membrane proteins into the membrane. This chain is Putative membrane protein insertion efficiency factor, found in Streptococcus agalactiae serotype III (strain NEM316).